We begin with the raw amino-acid sequence, 446 residues long: MDSIMEPYVADLLADDITASMVELLPGDGGAAQMDVGVLDAYLRAIGALPAHPAAPGADLAAAAEVESMASNDDTNGVLYDWDTKVDVKVPCALLPPPPGFPPLPVPGLADEPVYAAPARHLPPPPGFPPLPVPGLADEPVYAAPARRLPPPPGFPPLPVPAKAEPVYAAPVDEGDAIRAFMQQLEWSEQYNGDNDAPAPDNSTASRPQLCAPYDDDIDANLRDMEKDAAQRPSPDYLDTVQGGQISAAARASLVAWMGRLTHRYELAAGTLHRAVSYFDRFLSVRALPSYTAHQLSLVAATAVYTAAKYEDQGTVFKLDAREIASYGEFASAQEVLAMEREMMAALGYRLGGPNAETFVEHFTRYSKGKEELRVQRLACHVADRSLESYGCLGYLPSMVAAAAISIARWTLNPPGALPWSSELQELTGYSSQDISSCILTVLNTQ.

Residues 191–216 (YNGDNDAPAPDNSTASRPQLCAPYDD) form a disordered region.

Belongs to the cyclin family. Cyclin F subfamily.

In Oryza sativa subsp. japonica (Rice), this protein is Cyclin-F2-2 (CYCF2-2).